We begin with the raw amino-acid sequence, 214 residues long: ATP phosphoribosyltransferase (214 aa).

It belongs to the ATP phosphoribosyltransferase family. Short subfamily. As to quaternary structure, heteromultimer composed of HisG and HisZ subunits.

The protein resides in the cytoplasm. The catalysed reaction is 1-(5-phospho-beta-D-ribosyl)-ATP + diphosphate = 5-phospho-alpha-D-ribose 1-diphosphate + ATP. It participates in amino-acid biosynthesis; L-histidine biosynthesis; L-histidine from 5-phospho-alpha-D-ribose 1-diphosphate: step 1/9. In terms of biological role, catalyzes the condensation of ATP and 5-phosphoribose 1-diphosphate to form N'-(5'-phosphoribosyl)-ATP (PR-ATP). Has a crucial role in the pathway because the rate of histidine biosynthesis seems to be controlled primarily by regulation of HisG enzymatic activity. The sequence is that of ATP phosphoribosyltransferase from Halorhodospira halophila (strain DSM 244 / SL1) (Ectothiorhodospira halophila (strain DSM 244 / SL1)).